A 158-amino-acid polypeptide reads, in one-letter code: SUMO-conjugating enzyme UBC9 (158 aa).

The UBC core domain occupies 4–157 (IALSRLAQER…VRAQAKKFSP (154 aa)). Residues 13 to 18 (RKAWRK) are interaction with sumo1. The active-site Glycyl thioester intermediate is C93.

The protein belongs to the ubiquitin-conjugating enzyme family. As to quaternary structure, forms a tight complex with RANGAP1 and RANBP2.

Its subcellular location is the nucleus. It participates in protein modification; protein sumoylation. Accepts the ubiquitin-like proteins SUMO1, SUMO2 and SUMO3 from the UBLE1A-UBLE1B E1 complex and catalyzes their covalent attachment to other proteins with the help of an E3 ligase such as RANBP2 or CBX4. Essential for nuclear architecture and chromosome segregation. The protein is SUMO-conjugating enzyme UBC9 (ube2i) of Pagrus major (Red sea bream).